The following is a 1886-amino-acid chain: Highly reducing polyketide synthase (1886 aa).

In terms of domain architecture, Ketosynthase family 3 (KS3) spans 11-434 (TQDVAIVGLS…GANAHAVLDD (424 aa)). Catalysis depends on for beta-ketoacyl synthase activity residues Cys182, His317, and His357. Positions 483–568 (FLFSGQDQQS…VNNDLANTKK (86 aa)) are malonyl-CoA:ACP transacylase (MAT) domain. Residues 616–750 (RSLIGAPQPS…GLLSIEYESS (135 aa)) form an N-terminal hotdog fold region. Residues 616-926 (RSLIGAPQPS…CTAISEATNP (311 aa)) form the PKS/mFAS DH domain. Positions 618-924 (LIGAPQPSYG…LHCTAISEAT (307 aa)) are dehydratase (DH) domain. His648 functions as the Proton acceptor; for dehydratase activity in the catalytic mechanism. A C-terminal hotdog fold region spans residues 778–926 (HTTQSPKALY…CTAISEATNP (149 aa)). Residue Asp838 is the Proton donor; for dehydratase activity of the active site. The segment at 1169–1480 (GMLDEIYFEA…AGKHMGKVAL (312 aa)) is enoylreductase (ER) domain. Residues 1503–1681 (ATYVLVGGFG…VSLDLGLMRD (179 aa)) are catalytic ketoreductase (KRc) domain. One can recognise a Carrier domain in the interval 1802–1879 (DVTDLVLEIL…DLVDKIVAKS (78 aa)). Ser1839 is subject to O-(pantetheine 4'-phosphoryl)serine.

It functions in the pathway mycotoxin biosynthesis. Highly reducing polyketide synthase; part of the gene cluster that mediates the biosynthesis of the selective antifungal agent ascochitine, an o-quinone methide that plays a possible protective role against other microbial competitors in nature and is considered to be important for pathogenicity of legume-associated Didymella species. The pathway probably begins with the synthesis of a keto-aldehyde intermediate by the ascochitine non-reducing polyketide synthase pksAC from successive condensations of 4 malonyl-CoA units, presumably with a simple acetyl-CoA starter unit. Release of the keto-aldehyde intermediate is consistent with the presence of the C-terminal reductive release domain. The HR-PKS (orf7) probably makes a diketide starter unit which is passed to the non-reducing polyketide synthase pksAC for further extension, producing ascochital and ascochitine. The aldehyde dehydrogenase (orf1), the 2-oxoglutarate-dependent dioxygenase (orf3) and the dehydrogenase (orf9) are probably involved in subsequent oxidations of methyl groups to the carboxylic acid of the heterocyclic ring. The ascochitine gene cluster also includes a gene encoding a short peptide with a cupin domain (orf2) that is often found in secondary metabolite gene clusters and which function has still to be determined. The polypeptide is Highly reducing polyketide synthase (Didymella fabae (Leaf and pod spot disease fungus)).